We begin with the raw amino-acid sequence, 211 residues long: Small ribosomal subunit protein uS3 (211 aa).

Positions 16–85 (IDEYFKTKLV…NPQIEVKQVE (70 aa)) constitute a KH type-2 domain.

This sequence belongs to the universal ribosomal protein uS3 family. As to quaternary structure, part of the 30S ribosomal subunit.

Binds the lower part of the 30S subunit head. The protein is Small ribosomal subunit protein uS3 of Methanococcus maripaludis (strain C5 / ATCC BAA-1333).